Consider the following 132-residue polypeptide: Fatty acid-binding protein, adipocyte (132 aa).

C2 carries the post-translational modification N-acetylcysteine. Phosphoserine is present on S13. Y20 is modified (phosphotyrosine; by Tyr-kinases). The short motif at 22 to 32 (KEVGVGFATRK) is the Nuclear localization signal element. Residue 127–129 (RVY) participates in a fatty acid binding.

The protein belongs to the calycin superfamily. Fatty-acid binding protein (FABP) family. In terms of assembly, monomer. Homodimer. Interacts with PPARG.

It is found in the cytoplasm. The protein resides in the nucleus. In terms of biological role, lipid transport protein in adipocytes. Binds both long chain fatty acids and retinoic acid. Delivers long-chain fatty acids and retinoic acid to their cognate receptors in the nucleus. The chain is Fatty acid-binding protein, adipocyte (FABP4) from Cervus elaphus (Red deer).